The following is a 477-amino-acid chain: Ribulose bisphosphate carboxylase large chain (477 aa).

Residues Met-1–Ser-2 constitute a propeptide that is removed on maturation. At Pro-3 the chain carries N-acetylproline. N6,N6,N6-trimethyllysine is present on Lys-14. Asn-123 and Thr-173 together coordinate substrate. Lys-175 acts as the Proton acceptor in catalysis. Residue Lys-177 participates in substrate binding. Residues Lys-201, Asp-203, and Glu-204 each coordinate Mg(2+). Lys-201 is subject to N6-carboxylysine. His-294 (proton acceptor) is an active-site residue. 3 residues coordinate substrate: Arg-295, His-327, and Ser-379.

Belongs to the RuBisCO large chain family. Type I subfamily. In terms of assembly, heterohexadecamer of 8 large chains and 8 small chains; disulfide-linked. The disulfide link is formed within the large subunit homodimers. Mg(2+) is required as a cofactor. The disulfide bond which can form in the large chain dimeric partners within the hexadecamer appears to be associated with oxidative stress and protein turnover.

The protein resides in the plastid. The protein localises to the chloroplast. The enzyme catalyses 2 (2R)-3-phosphoglycerate + 2 H(+) = D-ribulose 1,5-bisphosphate + CO2 + H2O. It catalyses the reaction D-ribulose 1,5-bisphosphate + O2 = 2-phosphoglycolate + (2R)-3-phosphoglycerate + 2 H(+). RuBisCO catalyzes two reactions: the carboxylation of D-ribulose 1,5-bisphosphate, the primary event in carbon dioxide fixation, as well as the oxidative fragmentation of the pentose substrate in the photorespiration process. Both reactions occur simultaneously and in competition at the same active site. This Solanum bulbocastanum (Wild potato) protein is Ribulose bisphosphate carboxylase large chain.